The sequence spans 648 residues: Threonine--tRNA ligase (648 aa).

The 63-residue stretch at 1–63 (MTEINIEFPD…NENVKIEIVT (63 aa)) folds into the TGS domain. The segment at 243–541 (DHRVIGNNLD…LIEMYKGAFP (299 aa)) is catalytic. Zn(2+) is bound by residues Cys-337, His-388, and His-518.

The protein belongs to the class-II aminoacyl-tRNA synthetase family. In terms of assembly, homodimer. Zn(2+) serves as cofactor.

The protein resides in the cytoplasm. It catalyses the reaction tRNA(Thr) + L-threonine + ATP = L-threonyl-tRNA(Thr) + AMP + diphosphate + H(+). Catalyzes the attachment of threonine to tRNA(Thr) in a two-step reaction: L-threonine is first activated by ATP to form Thr-AMP and then transferred to the acceptor end of tRNA(Thr). Also edits incorrectly charged L-seryl-tRNA(Thr). In Pediococcus pentosaceus (strain ATCC 25745 / CCUG 21536 / LMG 10740 / 183-1w), this protein is Threonine--tRNA ligase.